Consider the following 636-residue polypeptide: MGNKNVFENENVKLRLIDLEYDYKQKFASTIASEVKKAKKDFEADIRRIYKEETHHDLPENMKIEIYTSNELVNQNTSIQSSTRESGYDGTAIHIIDEKKHIDQLQIISEGSADNKDWSYNFFGLFLGIDHSQYEATKEFTNKAKKAAGNSEDLKTFALGHSLANNNQVMVQLIDGEYDEVYGVNGAQVNIDQLLETDESLYRYVIRKFSYKYEDIDSIPPEKLKKEIQKYYEDKGVTTNITQRISKDDPLYGVSGKADFITFGDVKMADTNTSVKGIRNIMDGVPDEDVRSIQKFLQKYKDDYEKDGLNGFIKAASGIDIDLIEKVKNTDGALKKVSVLYEHFDDVKQMYGRIKEELPSFLGFLHTLLRNSGPVVDQLAENGYIDETQKKVIKKELTNINASMRGIESRYEHFIDHLKHGQFMQALKDVGEIVDYVKSILSSLKTLDTETKDALKLIVDGHSIVQMLNALSKEKGFSYKGSDIYFTGKSGSGETIQVNLSSAVRIYQNGMKIVEDMEDAISKYQKVYSQEIDEDFIDKKQAIITAIHHMEENPSHYAFDLQFRLAAGFSHTFDKLEKISVHESFHTGALPANDGIVAELKKQTTEKRDFIKNIRESIEKLFEKEEMISQLFDFQS.

This is an uncharacterized protein from Bacillus subtilis (strain 168).